The sequence spans 293 residues: Small ribosomal subunit biogenesis GTPase RsgA (293 aa).

The CP-type G domain occupies 63–223 (KNWLVRPPIA…VADTPGFSAL (161 aa)). Residues 112 to 115 (NKMD) and 166 to 174 (GQSGVGKSS) each bind GTP. The Zn(2+) site is built by Cys247, Cys252, His254, and Cys260.

This sequence belongs to the TRAFAC class YlqF/YawG GTPase family. RsgA subfamily. In terms of assembly, monomer. Associates with 30S ribosomal subunit, binds 16S rRNA. Zn(2+) is required as a cofactor.

Its subcellular location is the cytoplasm. Its function is as follows. One of several proteins that assist in the late maturation steps of the functional core of the 30S ribosomal subunit. Helps release RbfA from mature subunits. May play a role in the assembly of ribosomal proteins into the subunit. Circularly permuted GTPase that catalyzes slow GTP hydrolysis, GTPase activity is stimulated by the 30S ribosomal subunit. The polypeptide is Small ribosomal subunit biogenesis GTPase RsgA (Geobacillus sp. (strain WCH70)).